The primary structure comprises 361 residues: tRNA-specific 2-thiouridylase MnmA (361 aa).

ATP-binding positions include 8-15 (GMSGGVDS) and M34. Residues 94-96 (NPD) form an interaction with target base in tRNA region. The active-site Nucleophile is C99. Residues C99 and C195 are joined by a disulfide bond. Position 123 (G123) interacts with ATP. The tract at residues 145 to 147 (KDQ) is interaction with tRNA. C195 acts as the Cysteine persulfide intermediate in catalysis. Positions 307–308 (RY) are interaction with tRNA.

It belongs to the MnmA/TRMU family.

Its subcellular location is the cytoplasm. It catalyses the reaction S-sulfanyl-L-cysteinyl-[protein] + uridine(34) in tRNA + AH2 + ATP = 2-thiouridine(34) in tRNA + L-cysteinyl-[protein] + A + AMP + diphosphate + H(+). In terms of biological role, catalyzes the 2-thiolation of uridine at the wobble position (U34) of tRNA, leading to the formation of s(2)U34. The sequence is that of tRNA-specific 2-thiouridylase MnmA from Legionella pneumophila subsp. pneumophila (strain Philadelphia 1 / ATCC 33152 / DSM 7513).